A 269-amino-acid polypeptide reads, in one-letter code: Ribonuclease HII (269 aa).

The 190-residue stretch at 61–250 (RLVCGVDEAG…VRKMLSPGLE (190 aa)) folds into the RNase H type-2 domain. Residues aspartate 67, glutamate 68, and aspartate 158 each coordinate a divalent metal cation.

It belongs to the RNase HII family. Mn(2+) serves as cofactor. Mg(2+) is required as a cofactor.

The protein resides in the cytoplasm. The enzyme catalyses Endonucleolytic cleavage to 5'-phosphomonoester.. In terms of biological role, endonuclease that specifically degrades the RNA of RNA-DNA hybrids. This Parvibaculum lavamentivorans (strain DS-1 / DSM 13023 / NCIMB 13966) protein is Ribonuclease HII.